Here is a 547-residue protein sequence, read N- to C-terminus: Chaperonin GroEL (547 aa).

Residues 30-33 (TLGP), Lys-51, 87-91 (DGTTT), Gly-415, 479-481 (NAA), and Asp-495 each bind ATP.

The protein belongs to the chaperonin (HSP60) family. As to quaternary structure, forms a cylinder of 14 subunits composed of two heptameric rings stacked back-to-back. Interacts with the co-chaperonin GroES.

Its subcellular location is the cytoplasm. The enzyme catalyses ATP + H2O + a folded polypeptide = ADP + phosphate + an unfolded polypeptide.. In terms of biological role, together with its co-chaperonin GroES, plays an essential role in assisting protein folding. The GroEL-GroES system forms a nano-cage that allows encapsulation of the non-native substrate proteins and provides a physical environment optimized to promote and accelerate protein folding. The polypeptide is Chaperonin GroEL (Cupriavidus taiwanensis (strain DSM 17343 / BCRC 17206 / CCUG 44338 / CIP 107171 / LMG 19424 / R1) (Ralstonia taiwanensis (strain LMG 19424))).